The sequence spans 172 residues: Adenine phosphoribosyltransferase (172 aa).

It belongs to the purine/pyrimidine phosphoribosyltransferase family. Homodimer.

Its subcellular location is the cytoplasm. It carries out the reaction AMP + diphosphate = 5-phospho-alpha-D-ribose 1-diphosphate + adenine. The protein operates within purine metabolism; AMP biosynthesis via salvage pathway; AMP from adenine: step 1/1. In terms of biological role, catalyzes a salvage reaction resulting in the formation of AMP, that is energically less costly than de novo synthesis. The sequence is that of Adenine phosphoribosyltransferase from Synechococcus sp. (strain CC9311).